The following is a 426-amino-acid chain: Serine--tRNA ligase (426 aa).

L-serine is bound at residue 233–235; the sequence is TSE. Position 264–266 (264–266) interacts with ATP; it reads RSE. E287 is an L-serine binding site. 351–354 serves as a coordination point for ATP; it reads EISS. L-serine is bound at residue S387.

Belongs to the class-II aminoacyl-tRNA synthetase family. Type-1 seryl-tRNA synthetase subfamily. Homodimer. The tRNA molecule binds across the dimer.

It localises to the cytoplasm. The enzyme catalyses tRNA(Ser) + L-serine + ATP = L-seryl-tRNA(Ser) + AMP + diphosphate + H(+). It catalyses the reaction tRNA(Sec) + L-serine + ATP = L-seryl-tRNA(Sec) + AMP + diphosphate + H(+). It participates in aminoacyl-tRNA biosynthesis; selenocysteinyl-tRNA(Sec) biosynthesis; L-seryl-tRNA(Sec) from L-serine and tRNA(Sec): step 1/1. Catalyzes the attachment of serine to tRNA(Ser). Is also able to aminoacylate tRNA(Sec) with serine, to form the misacylated tRNA L-seryl-tRNA(Sec), which will be further converted into selenocysteinyl-tRNA(Sec). This is Serine--tRNA ligase from Colwellia psychrerythraea (strain 34H / ATCC BAA-681) (Vibrio psychroerythus).